Here is a 285-residue protein sequence, read N- to C-terminus: Sulfotransferase 2A2 (285 aa).

Residues Lys44, Ser45, Gly46, Thr47, Asn48, and Trp49 each coordinate 3'-phosphoadenylyl sulfate. His99 acts as the Proton acceptor in catalysis. 3'-phosphoadenylyl sulfate contacts are provided by Arg121, Ser129, Tyr184, Ser218, Met223, Arg247, Lys248, and Gly249.

Belongs to the sulfotransferase 1 family.

It is found in the cytoplasm. It carries out the reaction an alcohol + 3'-phosphoadenylyl sulfate = an alkyl sulfate + adenosine 3',5'-bisphosphate + H(+). Its function is as follows. Sulfotransferase that utilizes 3'-phospho-5'-adenylyl sulfate (PAPS) as sulfonate donor to catalyze the sulfate conjugation of a potential wide variety of acceptor molecules bearing a hydroxyl group. Sulfonation increases the water solubility of most compounds, and therefore their renal excretion, but it can also result in bioactivation to form active metabolites. This Mus musculus (Mouse) protein is Sulfotransferase 2A2.